The sequence spans 414 residues: MADQSSHQKYEFKKKLESLRGKKGRGTELISLYIPPDKQISDVVSQLRNEHSQASNIKSKLTKTNVQGAIDSIMSRLRYGTVPENGIVYFTGAVDVGANKTNMETTIVEPPQPIITYRYHCDSSFFLTPLEDMLKEAKTYGLLVLDRREATVGLLTGKQIEAFRNLTSTVPGKQRKGGQSAHRFQQLRLIAIHDFYKRIGDAASEVFLAVEQKDFEGVLIGGPSPTKEEFEAGNFFHHEIEKKVLDLFDVAYTDESGLSELVNAASERLEDLDLMVEKKLMQQFFRELVSDSGKATYGEDNVRENLIIGAVDILLISEDLRAVRETVKCTSCDYEQKTSREFKPGDSSSPTGNCPKCGSYLEITEKVDVVDQLSEICDQMGTRVEFISTDFEEGSQLLKAFGGVVAILRFNTGI.

It belongs to the eukaryotic release factor 1 family. As to quaternary structure, heterodimer of two subunits, one of which binds GTP.

The protein localises to the cytoplasm. In terms of biological role, directs the termination of nascent peptide synthesis (translation) in response to the termination codons UAA, UAG and UGA. The sequence is that of Peptide chain release factor subunit 1 from Methanococcoides burtonii (strain DSM 6242 / NBRC 107633 / OCM 468 / ACE-M).